Reading from the N-terminus, the 273-residue chain is 2,3,4,5-tetrahydropyridine-2,6-dicarboxylate N-succinyltransferase (273 aa).

Substrate contacts are provided by R106 and D143.

It belongs to the transferase hexapeptide repeat family. As to quaternary structure, homotrimer.

The protein localises to the cytoplasm. It carries out the reaction (S)-2,3,4,5-tetrahydrodipicolinate + succinyl-CoA + H2O = (S)-2-succinylamino-6-oxoheptanedioate + CoA. Its pathway is amino-acid biosynthesis; L-lysine biosynthesis via DAP pathway; LL-2,6-diaminopimelate from (S)-tetrahydrodipicolinate (succinylase route): step 1/3. This chain is 2,3,4,5-tetrahydropyridine-2,6-dicarboxylate N-succinyltransferase, found in Wolbachia pipientis wMel.